The following is a 172-amino-acid chain: ATP synthase subunit b (172 aa).

A helical membrane pass occupies residues 27-47 (LAIVIFGLYKFLPPFIGGILE).

It belongs to the ATPase B chain family. In terms of assembly, F-type ATPases have 2 components, F(1) - the catalytic core - and F(0) - the membrane proton channel. F(1) has five subunits: alpha(3), beta(3), gamma(1), delta(1), epsilon(1). F(0) has four main subunits: a(1), b(1), b'(1) and c(10-14). The alpha and beta chains form an alternating ring which encloses part of the gamma chain. F(1) is attached to F(0) by a central stalk formed by the gamma and epsilon chains, while a peripheral stalk is formed by the delta, b and b' chains.

The protein localises to the cellular thylakoid membrane. Functionally, f(1)F(0) ATP synthase produces ATP from ADP in the presence of a proton or sodium gradient. F-type ATPases consist of two structural domains, F(1) containing the extramembraneous catalytic core and F(0) containing the membrane proton channel, linked together by a central stalk and a peripheral stalk. During catalysis, ATP synthesis in the catalytic domain of F(1) is coupled via a rotary mechanism of the central stalk subunits to proton translocation. In terms of biological role, component of the F(0) channel, it forms part of the peripheral stalk, linking F(1) to F(0). This is ATP synthase subunit b from Prochlorococcus marinus (strain MIT 9313).